Consider the following 256-residue polypeptide: Imidazole glycerol phosphate synthase subunit HisF (256 aa).

Residues D11 and D130 contribute to the active site.

Belongs to the HisA/HisF family. Heterodimer of HisH and HisF.

It is found in the cytoplasm. It carries out the reaction 5-[(5-phospho-1-deoxy-D-ribulos-1-ylimino)methylamino]-1-(5-phospho-beta-D-ribosyl)imidazole-4-carboxamide + L-glutamine = D-erythro-1-(imidazol-4-yl)glycerol 3-phosphate + 5-amino-1-(5-phospho-beta-D-ribosyl)imidazole-4-carboxamide + L-glutamate + H(+). Its pathway is amino-acid biosynthesis; L-histidine biosynthesis; L-histidine from 5-phospho-alpha-D-ribose 1-diphosphate: step 5/9. Functionally, IGPS catalyzes the conversion of PRFAR and glutamine to IGP, AICAR and glutamate. The HisF subunit catalyzes the cyclization activity that produces IGP and AICAR from PRFAR using the ammonia provided by the HisH subunit. This Cupriavidus taiwanensis (strain DSM 17343 / BCRC 17206 / CCUG 44338 / CIP 107171 / LMG 19424 / R1) (Ralstonia taiwanensis (strain LMG 19424)) protein is Imidazole glycerol phosphate synthase subunit HisF.